The primary structure comprises 1724 residues: Protein mono-ADP-ribosyltransferase PARP4 (1724 aa).

Residues 1-94 (MVMGIFANCI…RLLDVKNYDP (94 aa)) form the BRCT domain. The Nuclear localization signal signature appears at 19-25 (PQQQKKK). The segment at 97-123 (PLDITPPPDQKASSSEVKTEGLCPDSA) is disordered. 2 positions are modified to phosphothreonine: threonine 101 and threonine 333. Residues 242–370 (SEQLQALLLE…ETNLSKPNPP (129 aa)) enclose the PARP alpha-helical domain. The PARP catalytic domain occupies 369-573 (PPSLAKYRAL…FSMPGDQIKD (205 aa)). One can recognise a VIT domain in the interval 607 to 735 (SSTKAGLQDA…KVLIKITYIT (129 aa)). In terms of domain architecture, VWFA spans 876–1046 (EVIICLDCSS…KQIEDQMTRL (171 aa)). Serine 1236 carries the post-translational modification Phosphoserine. The Nuclear localization signal motif lies at 1237-1249 (KRKHRKIPFSKRK). Serine 1335 carries the phosphoserine modification. The interval 1408–1452 (SAQSAPLQHPGGFTTRPSAGTFPELDSPQLHFSLPTDPDPIRGFG) is disordered. Arginine 1476 bears the Asymmetric dimethylarginine mark. The residue at position 1504 (serine 1504) is a Phosphoserine. Residues 1562 to 1724 (VCIQHWQDAV…LHRVLHYSQG (163 aa)) form an interaction with the major vault protein region.

Belongs to the ARTD/PARP family. As to quaternary structure, component of the vault ribonucleoprotein particle, at least composed of MVP, PARP4 and one or more vault RNAs (vRNAs). Interacts with TEP1. In terms of tissue distribution, widely expressed; the highest levels are in the kidney; also detected in heart, placenta, lung, liver, skeletal muscle, spleen, leukocytes and pancreas.

The protein resides in the cytoplasm. Its subcellular location is the nucleus. It localises to the cytoskeleton. The protein localises to the spindle. It carries out the reaction L-aspartyl-[protein] + NAD(+) = 4-O-(ADP-D-ribosyl)-L-aspartyl-[protein] + nicotinamide. The catalysed reaction is L-glutamyl-[protein] + NAD(+) = 5-O-(ADP-D-ribosyl)-L-glutamyl-[protein] + nicotinamide. In terms of biological role, mono-ADP-ribosyltransferase that mediates mono-ADP-ribosylation of target proteins. The polypeptide is Protein mono-ADP-ribosyltransferase PARP4 (Homo sapiens (Human)).